Here is a 104-residue protein sequence, read N- to C-terminus: Large ribosomal subunit protein uL24 (104 aa).

This sequence belongs to the universal ribosomal protein uL24 family. Part of the 50S ribosomal subunit.

One of two assembly initiator proteins, it binds directly to the 5'-end of the 23S rRNA, where it nucleates assembly of the 50S subunit. Functionally, one of the proteins that surrounds the polypeptide exit tunnel on the outside of the subunit. The sequence is that of Large ribosomal subunit protein uL24 from Shewanella baltica (strain OS223).